The chain runs to 233 residues: Thymidylate kinase (233 aa).

An ATP-binding site is contributed by 10 to 17 (GVDGVGKT).

It belongs to the thymidylate kinase family.

It carries out the reaction dTMP + ATP = dTDP + ADP. Its function is as follows. Phosphorylation of dTMP to form dTDP in both de novo and salvage pathways of dTTP synthesis. The polypeptide is Thymidylate kinase (Bifidobacterium longum subsp. infantis (strain ATCC 15697 / DSM 20088 / JCM 1222 / NCTC 11817 / S12)).